The primary structure comprises 538 residues: Furcatin hydrolase (538 aa).

The transit peptide at methionine 1–serine 66 directs the protein to the chloroplast. The segment at serine 18 to proline 37 is disordered. Residues glutamine 88, histidine 192, and asparagine 237–glutamate 238 each bind a beta-D-glucoside. The active-site Proton donor is the glutamate 238. Cysteine 257 and cysteine 260 form a disulfide bridge. A beta-D-glucoside-binding positions include tyrosine 376, glutamate 447, tryptophan 494, glutamate 501–tryptophan 502, and phenylalanine 510. Glutamate 447 (nucleophile) is an active-site residue.

The protein belongs to the glycosyl hydrolase 1 family. As to expression, expressed in young and mature leaves, but not in fruit and stem.

The protein localises to the plastid. The protein resides in the chloroplast. The enzyme catalyses 7-[beta-D-apiofuranosyl-(1-&gt;6)-beta-D-glucopyranosyloxy]isoflavonoid + H2O = a 7-hydroxyisoflavonoid + beta-D-apiofuranosyl-(1-&gt;6)-D-glucose.. Disaccharide-specific acuminosidase, hydrolyzes the beta-glycosidic bond between p-allylphenol and acuminose with retention of anomeric configuration. Has highest activity towards furcatin, and lower activity towards beta-primeverosides and beta-vicianoside. Has very low activity towards beta-gentobiosides. The sequence is that of Furcatin hydrolase from Viburnum furcatum (Scarlet leaved viburnum).